The sequence spans 68 residues: DNA-directed RNA polymerase subunit omega (68 aa).

This sequence belongs to the RNA polymerase subunit omega family. As to quaternary structure, the RNAP catalytic core consists of 2 alpha, 1 beta, 1 beta' and 1 omega subunit. When a sigma factor is associated with the core the holoenzyme is formed, which can initiate transcription.

The enzyme catalyses RNA(n) + a ribonucleoside 5'-triphosphate = RNA(n+1) + diphosphate. Its function is as follows. Promotes RNA polymerase assembly. Latches the N- and C-terminal regions of the beta' subunit thereby facilitating its interaction with the beta and alpha subunits. The sequence is that of DNA-directed RNA polymerase subunit omega from Desulforapulum autotrophicum (strain ATCC 43914 / DSM 3382 / VKM B-1955 / HRM2) (Desulfobacterium autotrophicum).